The following is a 517-amino-acid chain: Protein disulfide isomerase-like 1-2 (517 aa).

Residues 1–23 (MAVNLVLSFALAILISSSPTAVG) form the signal peptide. Residues 24-143 (VDATEELKEA…IVEYLKRQVG (120 aa)) form the Thioredoxin 1 domain. Asparagine 41 carries N-linked (GlcNAc...) asparagine glycosylation. Residues cysteine 61 and cysteine 64 each act as nucleophile in the active site. A disulfide bond links cysteine 61 and cysteine 64. An N-linked (GlcNAc...) asparagine glycan is attached at asparagine 301. Positions 357 to 484 (VEYGNLTPYV…IISFINENRG (128 aa)) constitute a Thioredoxin 2 domain. Catalysis depends on nucleophile residues cysteine 407 and cysteine 410. Cysteine 407 and cysteine 410 form a disulfide bridge. The short motif at 514-517 (KDEL) is the Prevents secretion from ER element.

It belongs to the protein disulfide isomerase family.

The protein resides in the endoplasmic reticulum lumen. It carries out the reaction Catalyzes the rearrangement of -S-S- bonds in proteins.. Functionally, acts as a protein-folding catalyst that interacts with nascent polypeptides to catalyze the formation, isomerization, and reduction or oxidation of disulfide bonds. May play a role in storage protein biogenesis. In Oryza sativa subsp. japonica (Rice), this protein is Protein disulfide isomerase-like 1-2 (PDIL1-2).